A 412-amino-acid chain; its full sequence is Phosphoglycerate kinase (412 aa).

Substrate-binding positions include 26-28, Arg-42, 65-68, Arg-133, and Arg-166; these read DFN and HLGR. ATP contacts are provided by residues Lys-217, Gly-308, Glu-339, and 368–371; that span reads GGDS.

This sequence belongs to the phosphoglycerate kinase family. Monomer.

Its subcellular location is the cytoplasm. It carries out the reaction (2R)-3-phosphoglycerate + ATP = (2R)-3-phospho-glyceroyl phosphate + ADP. It participates in carbohydrate degradation; glycolysis; pyruvate from D-glyceraldehyde 3-phosphate: step 2/5. This Synechococcus sp. (strain JA-2-3B'a(2-13)) (Cyanobacteria bacterium Yellowstone B-Prime) protein is Phosphoglycerate kinase.